The sequence spans 119 residues: Large ribosomal subunit protein bL20 (119 aa).

This sequence belongs to the bacterial ribosomal protein bL20 family.

In terms of biological role, binds directly to 23S ribosomal RNA and is necessary for the in vitro assembly process of the 50S ribosomal subunit. It is not involved in the protein synthesizing functions of that subunit. This is Large ribosomal subunit protein bL20 from Latilactobacillus sakei subsp. sakei (strain 23K) (Lactobacillus sakei subsp. sakei).